Consider the following 352-residue polypeptide: Photosystem II D2 protein (352 aa).

The chain crosses the membrane as a helical span at residues 40-60; sequence CAYLALGGWLTGTTFVTSWYT. His117 lines the chlorophyll a pocket. A helical transmembrane segment spans residues 124–140; that stretch reads GFMLRQFEIAQSVRLRP. Pheophytin a contacts are provided by Gln129 and Asn142. Residues 152 to 165 traverse the membrane as a helical segment; the sequence is VFVSVFLIYPLGQS. His197 contributes to the chlorophyll a binding site. Residues 207–227 form a helical membrane-spanning segment; the sequence is AALLCAIHGATVENTLFEDGD. A plastoquinone-binding residues include His214 and Phe261. Position 214 (His214) interacts with Fe cation. A Fe cation-binding site is contributed by His268. The chain crosses the membrane as a helical span at residues 278-294; that stretch reads GLWMSALGVVGLALNLR.

The protein belongs to the reaction center PufL/M/PsbA/D family. PSII is composed of 1 copy each of membrane proteins PsbA, PsbB, PsbC, PsbD, PsbE, PsbF, PsbH, PsbI, PsbJ, PsbK, PsbL, PsbM, PsbT, PsbY, PsbZ, Psb30/Ycf12, at least 3 peripheral proteins of the oxygen-evolving complex and a large number of cofactors. It forms dimeric complexes. Requires The D1/D2 heterodimer binds P680, chlorophylls that are the primary electron donor of PSII, and subsequent electron acceptors. It shares a non-heme iron and each subunit binds pheophytin, quinone, additional chlorophylls, carotenoids and lipids. There is also a Cl(-1) ion associated with D1 and D2, which is required for oxygen evolution. The PSII complex binds additional chlorophylls, carotenoids and specific lipids. as cofactor.

It localises to the plastid. It is found in the chloroplast thylakoid membrane. The catalysed reaction is 2 a plastoquinone + 4 hnu + 2 H2O = 2 a plastoquinol + O2. Photosystem II (PSII) is a light-driven water:plastoquinone oxidoreductase that uses light energy to abstract electrons from H(2)O, generating O(2) and a proton gradient subsequently used for ATP formation. It consists of a core antenna complex that captures photons, and an electron transfer chain that converts photonic excitation into a charge separation. The D1/D2 (PsbA/PsbD) reaction center heterodimer binds P680, the primary electron donor of PSII as well as several subsequent electron acceptors. D2 is needed for assembly of a stable PSII complex. The polypeptide is Photosystem II D2 protein (Bigelowiella natans (Pedinomonas minutissima)).